The sequence spans 484 residues: Zinc metalloproteinase-disintegrin stejnitin (484 aa).

Residues 1–20 (MIQVLLVTICLAVFPYQGNS) form the signal peptide. Positions 21–192 (IILESGNVND…ASQLNLTPDE (172 aa)) are excised as a propeptide. Gln-193 is subject to Pyrrolidone carboxylic acid. In terms of domain architecture, Peptidase M12B spans 194–392 (RFIELVIVAD…YTSRCLYNGP (199 aa)). Residue Glu-197 participates in Ca(2+) binding. Asn-254 carries an N-linked (GlcNAc...) asparagine glycan. Asp-281 contributes to the Ca(2+) binding site. Disulfide bonds link Cys-305–Cys-387, Cys-345–Cys-369, and Cys-347–Cys-352. Zn(2+) is bound by residues His-330, His-334, and His-340. Ca(2+) contacts are provided by Cys-387, Asn-390, Val-402, Asn-405, Glu-409, Glu-412, and Asp-415. In terms of domain architecture, Disintegrin spans 400–484 (PPVCGNYYVE…GDCPRNPFRA (85 aa)). 7 disulfides stabilise this stretch: Cys-403/Cys-422, Cys-414/Cys-432, Cys-416/Cys-427, Cys-426/Cys-449, Cys-440/Cys-446, Cys-445/Cys-470, and Cys-458/Cys-477. The Cell attachment site motif lies at 462–464 (KGD).

The protein belongs to the venom metalloproteinase (M12B) family. P-II subfamily. P-IIb sub-subfamily. Zn(2+) is required as a cofactor. Post-translationally, the N-terminus is blocked. Expressed by the venom gland.

The protein localises to the secreted. Functionally, snake venom zinc metalloproteinase that inhibits ADP-induced platelet aggregation in human platelet-rich plasma (IC(50) is 175 nM) and cleaves alpha-(FGA) and subsequently the beta-chain (FGG) of bovine fibrinogen, leaving the gamma-chain unaffected. It is also able to inhibit proliferatin of ECV304 cells by inducing apoptosis of these cells. The sequence is that of Zinc metalloproteinase-disintegrin stejnitin from Trimeresurus stejnegeri (Chinese green tree viper).